Reading from the N-terminus, the 170-residue chain is Protein AIG2 A (170 aa).

15–20 is a substrate binding site; the sequence is YGSFQE. E83 functions as the Proton acceptor in the catalytic mechanism. The segment covering 147-162 has biased composition (basic and acidic residues); the sequence is KNPNGRSREEFEKFVQ. The segment at 147 to 170 is disordered; that stretch reads KNPNGRSREEFEKFVQDDSSPASA.

The protein belongs to the gamma-glutamylcyclotransferase family. In terms of tissue distribution, ubiquitous.

Putative gamma-glutamylcyclotransferase. The protein is Protein AIG2 A of Arabidopsis thaliana (Mouse-ear cress).